Here is a 137-residue protein sequence, read N- to C-terminus: Ribosome-binding factor A (137 aa).

It belongs to the RbfA family. As to quaternary structure, monomer. Binds 30S ribosomal subunits, but not 50S ribosomal subunits or 70S ribosomes.

It localises to the cytoplasm. Functionally, one of several proteins that assist in the late maturation steps of the functional core of the 30S ribosomal subunit. Associates with free 30S ribosomal subunits (but not with 30S subunits that are part of 70S ribosomes or polysomes). Required for efficient processing of 16S rRNA. May interact with the 5'-terminal helix region of 16S rRNA. The sequence is that of Ribosome-binding factor A from Nitrobacter hamburgensis (strain DSM 10229 / NCIMB 13809 / X14).